The chain runs to 234 residues: Synaptogyrin-4 (234 aa).

The region spanning 18–169 (FLRRPKTITR…QAYLAFQDLR (152 aa)) is the MARVEL domain. 4 consecutive transmembrane segments (helical) span residues 25–45 (ITRVFEGVFSLIVFSSLLTDG), 66–86 (CSFAVGAGFLAFLSCLAFLVL), 104–124 (LLDFILAVLWAVVWFMGFCFL), and 145–165 (AAIAFTFFSILVWIFQAYLAF).

It belongs to the synaptogyrin family.

The protein localises to the membrane. This is Synaptogyrin-4 (SYNGR4) from Homo sapiens (Human).